A 62-amino-acid polypeptide reads, in one-letter code: Large ribosomal subunit protein bL33 (62 aa).

This sequence belongs to the bacterial ribosomal protein bL33 family.

This chain is Large ribosomal subunit protein bL33, found in Cyanothece sp. (strain PCC 7425 / ATCC 29141).